The following is a 158-amino-acid chain: Arginine repressor (158 aa).

Belongs to the ArgR family.

It localises to the cytoplasm. It participates in amino-acid biosynthesis; L-arginine biosynthesis [regulation]. In terms of biological role, regulates arginine biosynthesis genes. The polypeptide is Arginine repressor (Phocaeicola vulgatus (strain ATCC 8482 / DSM 1447 / JCM 5826 / CCUG 4940 / NBRC 14291 / NCTC 11154) (Bacteroides vulgatus)).